Reading from the N-terminus, the 502-residue chain is Putative diacyglycerol O-acyltransferase Rv1760 (502 aa).

Histidine 174 serves as the catalytic Proton acceptor.

This sequence belongs to the long-chain O-acyltransferase family.

The enzyme catalyses an acyl-CoA + a 1,2-diacyl-sn-glycerol = a triacyl-sn-glycerol + CoA. The catalysed reaction is di-(9Z)-octadecenoylglycerol + (9Z)-octadecenoyl-CoA = 1,2,3-tri-(9Z-octadecenoyl)-glycerol + CoA. It functions in the pathway glycerolipid metabolism; triacylglycerol biosynthesis. Catalyzes the terminal and only committed step in triacylglycerol synthesis by using diacylglycerol and fatty acyl CoA as substrates. Required for storage lipid synthesis. Its function is as follows. Upon expression in E.coli functions weakly as a triacylglycerol synthase, making triacylglycerol (TG) from diolein and long-chain fatty acyl-CoA. Has very weak wax synthase activity, incorporating palmityl alcohol into wax esters in the presence of palmitoyl-CoA. This is Putative diacyglycerol O-acyltransferase Rv1760 from Mycobacterium tuberculosis (strain ATCC 25618 / H37Rv).